The chain runs to 182 residues: Probable chorismate pyruvate-lyase (182 aa).

Substrate contacts are provided by Arg81, Leu119, and Glu171.

It belongs to the UbiC family.

It localises to the cytoplasm. The catalysed reaction is chorismate = 4-hydroxybenzoate + pyruvate. It participates in cofactor biosynthesis; ubiquinone biosynthesis. Its function is as follows. Removes the pyruvyl group from chorismate, with concomitant aromatization of the ring, to provide 4-hydroxybenzoate (4HB) for the ubiquinone pathway. In Pseudomonas putida (Arthrobacter siderocapsulatus), this protein is Probable chorismate pyruvate-lyase.